We begin with the raw amino-acid sequence, 86 residues long: MKPDIHPVYRTVVFHDTSANEYVKVGSTIKTKREIELDGVTYPYVTIDVSSKSHPFYTGKQKTFDSESSAARFQKRFGHFIGAKRG.

Belongs to the bacterial ribosomal protein bL31 family. Type B subfamily. As to quaternary structure, part of the 50S ribosomal subunit.

This is Large ribosomal subunit protein bL31B from Salmonella arizonae (strain ATCC BAA-731 / CDC346-86 / RSK2980).